The chain runs to 57 residues: uncharacterized protein (57 aa).

Residues V26–Y57 form a disordered region. A compositionally biased stretch (acidic residues) spans S46–Y57.

This is an uncharacterized protein from Autographa californica nuclear polyhedrosis virus (AcMNPV).